The primary structure comprises 62 residues: Conotoxin Gm5.2 (62 aa).

A signal peptide spans 1–22 (MRCLPVFVILLLLIASAPSVDA). Positions 23–49 (QPKTKDDVPLAPLHDNIRSTLQTLRKK) are excised as a propeptide. S60 carries the post-translational modification Serine amide.

This sequence belongs to the conotoxin T superfamily. Contains 2 disulfide bonds that can be either 'C1-C3, C2-C4' or 'C1-C4, C2-C3', since these disulfide connectivities have been observed for conotoxins with cysteine framework V (for examples, see AC P0DQQ7 and AC P81755). As to expression, expressed by the venom duct.

It localises to the secreted. This is Conotoxin Gm5.2 from Conus gloriamaris (Glory-of-the-Sea cone).